Reading from the N-terminus, the 106-residue chain is ATP-dependent Clp protease adapter protein ClpS (106 aa).

The protein belongs to the ClpS family. Binds to the N-terminal domain of the chaperone ClpA.

Involved in the modulation of the specificity of the ClpAP-mediated ATP-dependent protein degradation. The protein is ATP-dependent Clp protease adapter protein ClpS of Escherichia coli O127:H6 (strain E2348/69 / EPEC).